A 62-amino-acid polypeptide reads, in one-letter code: Large ribosomal subunit protein uL30 (62 aa).

Belongs to the universal ribosomal protein uL30 family. Part of the 50S ribosomal subunit.

In Shewanella frigidimarina (strain NCIMB 400), this protein is Large ribosomal subunit protein uL30.